Reading from the N-terminus, the 557-residue chain is Leucine-rich glioma-inactivated protein 1 (557 aa).

An N-terminal signal peptide occupies residues 1-34 (MESESSRRMGNACIPLKRIAYFLCLFSVVLLTEG). The LRRNT domain occupies 35-72 (KKPAKPKCPAVCTCSKDNALCENARSIPRTVPPDVISL). LRR repeat units lie at residues 92–113 (SLQLLLFTSNSFDVISDDAFIG), 116–137 (HLEYLFIENNNIKSISRHTFRG), and 140–161 (SLIHLSLANNNLQTLPKDIFKG). One can recognise an LRRCT domain in the interval 173–223 (NAFNCDCKLKWLVEWLGHTNATVEDIYCEGPPEYKKRKINSLSPKDFDCII). The N-linked (GlcNAc...) asparagine glycan is linked to N192. EAR repeat units follow at residues 225–267 (EFAK…EWDH), 271–313 (TFRN…KRDG), 317–364 (KFIK…KWNG), 366–415 (GFYS…QWSK), 419–462 (LFTN…KWGG), 464–506 (SFQD…NWDA), and 510–552 (KFVK…KHVI). N277 is a glycosylation site (N-linked (GlcNAc...) asparagine). The N-linked (GlcNAc...) asparagine glycan is linked to N422.

As to quaternary structure, oligomer. Interacts with KCNA1 within a complex containing KCNA1, KCNA4 and KCNAB1. Part of a complex containing ADAM22, DLG4/PSD95 and CACNG2 (stargazin). Can bind to ADAM11 and ADAM23. Glycosylated. As to expression, expressed in the brain (at protein level). Expressed in cerebellar cortex basket cell terminals (at protein level). Highly expressed in the dentate gyrus and CA3 field of the hippocampus.

The protein localises to the secreted. The protein resides in the synapse. It localises to the cytoplasm. It is found in the golgi apparatus. Its subcellular location is the endoplasmic reticulum. Functionally, regulates voltage-gated potassium channels assembled from KCNA1, KCNA4 and KCNAB1. It slows down channel inactivation by precluding channel closure mediated by the KCNAB1 subunit. Ligand for ADAM22 that positively regulates synaptic transmission mediated by AMPA-type glutamate receptors. Plays a role in suppressing the production of MMP1/3 through the phosphatidylinositol 3-kinase/ERK pathway. This Mus musculus (Mouse) protein is Leucine-rich glioma-inactivated protein 1.